The sequence spans 267 residues: Small ribosomal subunit protein uS2 (267 aa).

The tract at residues Met1–Glu72 is disordered. The span at Asp10 to Glu72 shows a compositional bias: acidic residues.

The protein belongs to the universal ribosomal protein uS2 family. Post-translationally, the N-terminus is blocked.

This Haloarcula marismortui (strain ATCC 43049 / DSM 3752 / JCM 8966 / VKM B-1809) (Halobacterium marismortui) protein is Small ribosomal subunit protein uS2 (rps2).